Consider the following 173-residue polypeptide: Superoxide dismutase [Cu-Zn] 2 (173 aa).

An N-terminal signal peptide occupies residues 1 to 19; that stretch reads MKRLSLAMVTLLACAGAQA. Residues His-67, His-69, and His-92 each contribute to the Cu cation site. A disulfide bridge connects residues Cys-74 and Cys-169. The Zn(2+) site is built by His-92, His-101, His-109, and Asp-112. His-147 contacts Cu cation.

Belongs to the Cu-Zn superoxide dismutase family. In terms of assembly, monomer. It depends on Cu cation as a cofactor. Zn(2+) serves as cofactor.

It is found in the periplasm. It carries out the reaction 2 superoxide + 2 H(+) = H2O2 + O2. Its function is as follows. Destroys radicals which are normally produced within the cells and which are toxic to biological systems. This Salmonella typhimurium (strain LT2 / SGSC1412 / ATCC 700720) protein is Superoxide dismutase [Cu-Zn] 2 (sodC).